A 268-amino-acid polypeptide reads, in one-letter code: Peptide transport system ATP-binding protein SapF (268 aa).

Residues 6 to 251 (LEVRNLSKTF…PLHELTKRLI (246 aa)) form the ABC transporter domain. Residue 47–54 (GENGSGKS) participates in ATP binding.

This sequence belongs to the ABC transporter superfamily.

It is found in the cell inner membrane. Its function is as follows. Involved in a peptide intake transport system that plays a role in the resistance to antimicrobial peptides. This is Peptide transport system ATP-binding protein SapF (sapF) from Escherichia coli O6:H1 (strain CFT073 / ATCC 700928 / UPEC).